We begin with the raw amino-acid sequence, 259 residues long: Proteasome subunit alpha 1 (259 aa).

The segment at leucine 231–aspartate 259 is disordered. Residues proline 233 to alanine 243 show a composition bias toward low complexity. The segment covering proline 244 to aspartate 259 has biased composition (basic and acidic residues).

This sequence belongs to the peptidase T1A family. As to quaternary structure, the 20S proteasome core is composed of 14 alpha and 14 beta subunits that assemble into four stacked heptameric rings, resulting in a barrel-shaped structure. The two inner rings, each composed of seven catalytic beta subunits, are sandwiched by two outer rings, each composed of seven alpha subunits. All four combinations of alpha- and beta-subunits (beta2-alpha1, beta2-alpha2, beta1-alpha2 and beta1-alpha1) yield fully assembled and proteolytically active proteasomes. The catalytic chamber with the active sites is on the inside of the barrel. Has probably a gated structure, the ends of the cylinder being occluded by the N-termini of the alpha-subunits. Is likely capped by the proteasome-associated ATPase, ARC. In terms of processing, the N-terminus is blocked.

It localises to the cytoplasm. It participates in protein degradation; proteasomal Pup-dependent pathway. Its activity is regulated as follows. The formation of the proteasomal ATPase ARC-20S proteasome complex, likely via the docking of the C-termini of ARC into the intersubunit pockets in the alpha-rings, may trigger opening of the gate for substrate entry. Interconversion between the open-gate and close-gate conformations leads to a dynamic regulation of the 20S proteasome proteolysis activity. In terms of biological role, component of the proteasome core, a large protease complex with broad specificity involved in protein degradation. The R.erythropolis proteasomes are able to cleave oligopeptides after Tyr, Phe and Leu, very poorly after Arg but not after Glu. Thus, displays chymotrypsin-like activity, low trypsin-like activity but no caspase-like activity. The chain is Proteasome subunit alpha 1 from Rhodococcus erythropolis (Arthrobacter picolinophilus).